We begin with the raw amino-acid sequence, 145 residues long: Beta sliding clamp (145 aa).

It belongs to the beta sliding clamp family. Forms a ring-shaped head-to-tail homodimer around DNA which binds and tethers DNA polymerases and other proteins to the DNA. The DNA replisome complex has a single clamp-loading complex (3 tau and 1 each of delta, delta', psi and chi subunits) which binds 3 Pol III cores (1 core on the leading strand and 2 on the lagging strand) each with a beta sliding clamp dimer. Additional proteins in the replisome are other copies of gamma, psi and chi, Ssb, DNA helicase and RNA primase.

Its subcellular location is the cytoplasm. Its function is as follows. Confers DNA tethering and processivity to DNA polymerases and other proteins. Acts as a clamp, forming a ring around DNA (a reaction catalyzed by the clamp-loading complex) which diffuses in an ATP-independent manner freely and bidirectionally along dsDNA. Initially characterized for its ability to contact the catalytic subunit of DNA polymerase III (Pol III), a complex, multichain enzyme responsible for most of the replicative synthesis in bacteria; Pol III exhibits 3'-5' exonuclease proofreading activity. The beta chain is required for initiation of replication as well as for processivity of DNA replication. In Vibrio harveyi (Beneckea harveyi), this protein is Beta sliding clamp (dnaN).